Here is a 357-residue protein sequence, read N- to C-terminus: Probable dual-specificity RNA methyltransferase RlmN (357 aa).

Glutamate 92 functions as the Proton acceptor in the catalytic mechanism. Residues glutamine 98 to arginine 330 form the Radical SAM core domain. Cysteine 105 and cysteine 341 are joined by a disulfide. Positions 112, 116, and 119 each coordinate [4Fe-4S] cluster. Residues glycine 164–glutamate 165, serine 196, serine 219–histidine 221, and asparagine 297 each bind S-adenosyl-L-methionine. Cysteine 341 serves as the catalytic S-methylcysteine intermediate.

It belongs to the radical SAM superfamily. RlmN family. [4Fe-4S] cluster serves as cofactor.

The protein localises to the cytoplasm. It carries out the reaction adenosine(2503) in 23S rRNA + 2 reduced [2Fe-2S]-[ferredoxin] + 2 S-adenosyl-L-methionine = 2-methyladenosine(2503) in 23S rRNA + 5'-deoxyadenosine + L-methionine + 2 oxidized [2Fe-2S]-[ferredoxin] + S-adenosyl-L-homocysteine. The catalysed reaction is adenosine(37) in tRNA + 2 reduced [2Fe-2S]-[ferredoxin] + 2 S-adenosyl-L-methionine = 2-methyladenosine(37) in tRNA + 5'-deoxyadenosine + L-methionine + 2 oxidized [2Fe-2S]-[ferredoxin] + S-adenosyl-L-homocysteine. Functionally, specifically methylates position 2 of adenine 2503 in 23S rRNA and position 2 of adenine 37 in tRNAs. The sequence is that of Probable dual-specificity RNA methyltransferase RlmN from Enterococcus faecalis (strain ATCC 700802 / V583).